The sequence spans 278 residues: MQINNQSRDVFYVSDGTAITCETLGHVVLGQFPFIPNEKTFPFVESQDKVADVVKEIETSYQRNGVKPLVFFSIVVPGVREMLLEAPAYSYDVLESIVQKVQDDIQMAPAPKLQRSRSVGKDSDTYFDRIAAIEYTLAHDDGITLKGLEQADIILLGVSRSGKTPTSLYMAMQFGLRVVNYPFIAEDVKMMRLLPEFEVHRHKLFGLTITPERLNEIRENRLSGSDYASEEQCKLELDTVEALFRREAIPYINTSSLSVEEISTRILERAGMKRRLFG.

157 to 164 (GVSRSGKT) lines the ADP pocket.

It belongs to the pyruvate, phosphate/water dikinase regulatory protein family. PSRP subfamily.

It catalyses the reaction [pyruvate, water dikinase] + ADP = [pyruvate, water dikinase]-phosphate + AMP + H(+). It carries out the reaction [pyruvate, water dikinase]-phosphate + phosphate + H(+) = [pyruvate, water dikinase] + diphosphate. Bifunctional serine/threonine kinase and phosphorylase involved in the regulation of the phosphoenolpyruvate synthase (PEPS) by catalyzing its phosphorylation/dephosphorylation. The polypeptide is Putative phosphoenolpyruvate synthase regulatory protein (Vibrio parahaemolyticus serotype O3:K6 (strain RIMD 2210633)).